The following is a 332-amino-acid chain: Nuclear hormone receptor family member nhr-9 (332 aa).

Residues 11-85 (ERRCAICSKL…MGMRIVTNQY (75 aa)) constitute a DNA-binding region (nuclear receptor). NR C4-type zinc fingers lie at residues 14-34 (CAICSKLGNSYNYGVLSCNAC) and 50-73 (CINNDNCDTSNLILTCRQCRYNKC). The NR LBD domain maps to 101–332 (DRSNKLMNFQ…KRLCAELLGA (232 aa)).

It belongs to the nuclear hormone receptor family.

The protein resides in the nucleus. Orphan nuclear receptor. This Caenorhabditis elegans protein is Nuclear hormone receptor family member nhr-9 (nhr-9).